A 129-amino-acid polypeptide reads, in one-letter code: Fluoride-specific ion channel FluC (129 aa).

4 helical membrane-spanning segments follow: residues 4-24, 30-50, 63-83, and 95-115; these read VLIV…LGEW, GFPT…GWLL, WSLL…TFSV, and IVAS…AYIG. Residues glycine 73 and threonine 76 each contribute to the Na(+) site.

It belongs to the fluoride channel Fluc/FEX (TC 1.A.43) family.

The protein localises to the cell membrane. The catalysed reaction is fluoride(in) = fluoride(out). Its activity is regulated as follows. Na(+) is not transported, but it plays an essential structural role and its presence is essential for fluoride channel function. In terms of biological role, fluoride-specific ion channel. Important for reducing fluoride concentration in the cell, thus reducing its toxicity. This chain is Fluoride-specific ion channel FluC, found in Oceanobacillus iheyensis (strain DSM 14371 / CIP 107618 / JCM 11309 / KCTC 3954 / HTE831).